The chain runs to 375 residues: Alpha-2,8-sialyltransferase 8B (375 aa).

The Cytoplasmic portion of the chain corresponds to M1–R6. Residues S7–A23 form a helical; Signal-anchor for type II membrane protein membrane-spanning segment. Topologically, residues D24–T375 are lumenal. N60, N72, N89, and N134 each carry an N-linked (GlcNAc...) asparagine glycan. 2 cysteine pairs are disulfide-bonded: C157-C307 and C171-C371. CMP-N-acetyl-beta-neuraminate-binding residues include N162 and N185. N-linked (GlcNAc...) asparagine glycosylation is found at N219 and N234. T294, T295, G296, W316, Y329, and H330 together coordinate CMP-N-acetyl-beta-neuraminate. The active-site Proton donor/acceptor is H346.

Belongs to the glycosyltransferase 29 family. Autopolysialylated. Autopolysialylation is not a prerequisite for the polysialylation acitity, but enhances the polysialylation acitity. Highly expressed in fetal brain, kidney and heart and to a much lesser extent in adult heart and thymus.

Its subcellular location is the golgi apparatus membrane. It localises to the secreted. The protein localises to the cell membrane. The enzyme catalyses [N-acetyl-alpha-D-neuraminosyl-(2-&gt;8)](n) + CMP-N-acetyl-beta-neuraminate = [N-acetyl-alpha-D-neuraminosyl-(2-&gt;8)](n+1) + CMP + H(+). The protein operates within protein modification; protein glycosylation. Functionally, catalyzes the transfer of a sialic acid from a CMP-linked sialic acid donor onto a terminal alpha-2,3-, alpha-2,6-, or alpha-2,8-linked sialic acid of an N-linked glycan acceptor through alpha-2,8-linkages. Therefore, participates in polysialic acid synthesis on various sialylated N-acetyllactosaminyl oligosaccharides (alpha-2,3-, alpha-2,6-, or alpha-2,8-linked sialic acid), including NCAM1, NCAM1 N-glycans, FETUB N-glycans, and to a lesser extent sialylparagloboside (SPG) and AHSG, which does not require the initial addition of an alpha 2,8-sialic acid. However, does not exhibit sialic acid-polymerase activity. Catalyzes polysialic acid synthesis in the hippocampal on NCAM1 and supports neurite outgrowth. ST8SIA2-mediated polysialylation influences on oligodendrocyte differentiation and may promote the integrity of myelin and axons. The sequence is that of Alpha-2,8-sialyltransferase 8B from Homo sapiens (Human).